The following is a 35-amino-acid chain: Alpha-amanitin proprotein 2 (35 aa).

Residues 1–10 (MFDTNSTRLP) constitute a propeptide that is removed on maturation. A (3R,4R)-4,5-dihydroxyisoleucine; in form alpha-amanitin modification is found at I11. (3R,4S)-4-hydroxyisoleucine; in form gamma-amanitin is present on I11. The segment at residues 11 to 18 (IWGIGCNP) is a cross-link (cyclopeptide (Ile-Pro)). The 2'-cysteinyl-6'-hydroxytryptophan sulfoxide (Trp-Cys) cross-link spans 12-16 (WGIGC). A 4-hydroxyproline modification is found at P18. The propeptide occupies 19–35 (WTAEHVDQTLVSGNDIC).

It belongs to the MSDIN fungal toxin family. Post-translationally, processed by the macrocyclase-peptidase enzyme POPB to yield a toxic bicyclic octapeptide. POPB first removes 10 residues from the N-terminus. Conformational trapping of the remaining peptide forces the enzyme to release this intermediate rather than proceed to macrocyclization. The enzyme rebinds the remaining peptide in a different conformation and catalyzes macrocyclization of the N-terminal 8 residues.

Its function is as follows. Major toxin belonging to the bicyclic octapeptides amatoxins that acts by binding non-competitively to RNA polymerase II and greatly slowing the elongation of transcripts from target promoters. The chain is Alpha-amanitin proprotein 2 from Galerina marginata (strain CBS 339.88).